The sequence spans 255 residues: uncharacterized protein (255 aa).

A signal peptide spans Met-1–Met-22.

This is an uncharacterized protein from Acanthamoeba polyphaga (Amoeba).